The sequence spans 149 residues: D-aminoacyl-tRNA deacylase (149 aa).

Residues glycine 137 to proline 138 carry the Gly-cisPro motif, important for rejection of L-amino acids motif.

It belongs to the DTD family. As to quaternary structure, homodimer.

It localises to the cytoplasm. It carries out the reaction glycyl-tRNA(Ala) + H2O = tRNA(Ala) + glycine + H(+). The enzyme catalyses a D-aminoacyl-tRNA + H2O = a tRNA + a D-alpha-amino acid + H(+). Its function is as follows. An aminoacyl-tRNA editing enzyme that deacylates mischarged D-aminoacyl-tRNAs. Also deacylates mischarged glycyl-tRNA(Ala), protecting cells against glycine mischarging by AlaRS. Acts via tRNA-based rather than protein-based catalysis; rejects L-amino acids rather than detecting D-amino acids in the active site. By recycling D-aminoacyl-tRNA to D-amino acids and free tRNA molecules, this enzyme counteracts the toxicity associated with the formation of D-aminoacyl-tRNA entities in vivo and helps enforce protein L-homochirality. This Clostridium botulinum (strain Loch Maree / Type A3) protein is D-aminoacyl-tRNA deacylase.